A 115-amino-acid polypeptide reads, in one-letter code: T cell receptor delta variable 2 (115 aa).

A signal peptide spans 1-19; it reads MQRISSLIHLSLFWAGVMS. Positions 25–115 constitute an Ig-like domain; the sequence is PEHQTVPVSI…EGSYYCACDT (91 aa). The cysteines at positions 42 and 111 are disulfide-linked.

In terms of assembly, gamma-delta TR is a heterodimer composed of a gamma and delta chain; disulfide-linked. The gamma-delta TR is associated with the transmembrane signaling CD3 coreceptor proteins following the stoichiometry: a single gamma-delta TR heterodimer associates with one CD3D-CD3E heterodimer, one CD3G-CD3E heterodimer and one CD247 homodimer forming a stable octameric structure. Upon activation, gamma-delta TR complex associates with FCER1G to initiate intracellular signaling.

The protein localises to the cell membrane. In terms of biological role, v region of the variable domain of T cell receptor (TR) delta chain that participates in the antigen recognition. Gamma-delta TRs recognize a variety of self and foreign non-peptide antigens frequently expressed at the epithelial boundaries between the host and external environment, including endogenous lipids presented by MH-like protein CD1D and phosphoantigens presented by butyrophilin-like molecule BTN3A1. Upon antigen recognition induces rapid, innate-like immune responses involved in pathogen clearance and tissue repair. Binding of gamma-delta TR complex to antigen triggers phosphorylation of immunoreceptor tyrosine-based activation motifs (ITAMs) in the CD3 chains by the LCK and FYN kinases, allowing the recruitment, phosphorylation, and activation of ZAP70 that facilitates phosphorylation of the scaffolding proteins LCP2 and LAT. This lead to the formation of a supramolecular signalosome that recruits the phospholipase PLCG1, resulting in calcium mobilization and ERK activation, ultimately leading to T cell expansion and differentiation into effector cells. Gamma-delta TRs are produced through somatic rearrangement of a limited repertoire of variable (V), diversity (D), and joining (J) genes. The potential diversity of gamma-delta TRs is conferred by the unique ability to rearrange (D) genes in tandem and to utilize all three reading frames. The combinatorial diversity is considerably increased by the sequence exonuclease trimming and random nucleotide (N) region additions which occur during the V-(D)-J rearrangements. In Homo sapiens (Human), this protein is T cell receptor delta variable 2.